We begin with the raw amino-acid sequence, 149 residues long: Endoribonuclease YbeY (149 aa).

Zn(2+) contacts are provided by histidine 116, histidine 120, and histidine 126.

The protein belongs to the endoribonuclease YbeY family. Requires Zn(2+) as cofactor.

It localises to the cytoplasm. Functionally, single strand-specific metallo-endoribonuclease involved in late-stage 70S ribosome quality control and in maturation of the 3' terminus of the 16S rRNA. This Nocardioides sp. (strain ATCC BAA-499 / JS614) protein is Endoribonuclease YbeY.